The following is a 766-amino-acid chain: Sucrose synthase (766 aa).

The GT-B glycosyltransferase stretch occupies residues 220 to 698 (MVFNVVILSV…GLLRIKERYT (479 aa)).

Belongs to the glycosyltransferase 1 family. Plant sucrose synthase subfamily. As to expression, expressed most predominantly in tap root.

It catalyses the reaction an NDP-alpha-D-glucose + D-fructose = a ribonucleoside 5'-diphosphate + sucrose + H(+). Sucrose-cleaving enzyme that provides UDP-glucose and fructose for various metabolic pathways. The polypeptide is Sucrose synthase (SS1) (Beta vulgaris (Sugar beet)).